The primary structure comprises 156 residues: ATP synthase subunit b (156 aa).

A helical transmembrane segment spans residues 7–27 (LIGQTVAFIIFVWFCMKFVWP).

Belongs to the ATPase B chain family. As to quaternary structure, F-type ATPases have 2 components, F(1) - the catalytic core - and F(0) - the membrane proton channel. F(1) has five subunits: alpha(3), beta(3), gamma(1), delta(1), epsilon(1). F(0) has three main subunits: a(1), b(2) and c(10-14). The alpha and beta chains form an alternating ring which encloses part of the gamma chain. F(1) is attached to F(0) by a central stalk formed by the gamma and epsilon chains, while a peripheral stalk is formed by the delta and b chains.

The protein resides in the cell inner membrane. Its function is as follows. F(1)F(0) ATP synthase produces ATP from ADP in the presence of a proton or sodium gradient. F-type ATPases consist of two structural domains, F(1) containing the extramembraneous catalytic core and F(0) containing the membrane proton channel, linked together by a central stalk and a peripheral stalk. During catalysis, ATP synthesis in the catalytic domain of F(1) is coupled via a rotary mechanism of the central stalk subunits to proton translocation. In terms of biological role, component of the F(0) channel, it forms part of the peripheral stalk, linking F(1) to F(0). In Shewanella sp. (strain ANA-3), this protein is ATP synthase subunit b.